We begin with the raw amino-acid sequence, 148 residues long: Wound-induced proteinase inhibitor 2 (148 aa).

The N-terminal stretch at 1-25 (MAVHKEVNFVAYLLIVLGMFLYVDA) is a signal peptide. The 1; trypsin-inhibitory repeat unit spans residues 26–81 (KACTRECGNLGFGICPRSEGSPLNPICINCCSGYKGCNYYNSFGKFICEGESDPKR). Cystine bridges form between Cys28-Cys116, Cys32-Cys112, Cys40-Cys122, Cys52-Cys89, Cys55-Cys73, Cys56-Cys85, Cys62-Cys98, and Cys115-Cys133. Residues 83–141 (NACTFNCDPNIAYSRCPRSQGKSLIYPTGCTTCCTGYKGCYYFGKDGKFVCEGESDEPK) form a 2; chymotrypsin-inhibitory repeat.

The protein belongs to the protease inhibitor I20 (potato type II proteinase inhibitor) family.

The protein resides in the secreted. Functionally, potent inhibitor of both trypsin and chymotrypsin. The chain is Wound-induced proteinase inhibitor 2 from Solanum lycopersicum (Tomato).